A 341-amino-acid chain; its full sequence is uncharacterized protein (341 aa).

58 to 82 (ITGGSSGIGAAAAKKIAEAGGTVVL) provides a ligand contact to NADP(+). Ser194 provides a ligand contact to substrate. Residue Tyr207 is the Proton acceptor of the active site. The tract at residues 309–329 (DSSAAKGSESQTDTSELDKRS) is disordered.

It belongs to the short-chain dehydrogenases/reductases (SDR) family.

This is an uncharacterized protein from Mycobacterium bovis (strain ATCC BAA-935 / AF2122/97).